Reading from the N-terminus, the 156-residue chain is ATP synthase subunit b (156 aa).

The chain crosses the membrane as a helical span at residues 11–31; the sequence is AIAFVLFVLFCMKYVWPPIMA.

This sequence belongs to the ATPase B chain family. As to quaternary structure, F-type ATPases have 2 components, F(1) - the catalytic core - and F(0) - the membrane proton channel. F(1) has five subunits: alpha(3), beta(3), gamma(1), delta(1), epsilon(1). F(0) has three main subunits: a(1), b(2) and c(10-14). The alpha and beta chains form an alternating ring which encloses part of the gamma chain. F(1) is attached to F(0) by a central stalk formed by the gamma and epsilon chains, while a peripheral stalk is formed by the delta and b chains.

The protein localises to the cell inner membrane. F(1)F(0) ATP synthase produces ATP from ADP in the presence of a proton or sodium gradient. F-type ATPases consist of two structural domains, F(1) containing the extramembraneous catalytic core and F(0) containing the membrane proton channel, linked together by a central stalk and a peripheral stalk. During catalysis, ATP synthesis in the catalytic domain of F(1) is coupled via a rotary mechanism of the central stalk subunits to proton translocation. In terms of biological role, component of the F(0) channel, it forms part of the peripheral stalk, linking F(1) to F(0). This chain is ATP synthase subunit b, found in Cronobacter sakazakii (strain ATCC BAA-894) (Enterobacter sakazakii).